We begin with the raw amino-acid sequence, 308 residues long: Glutaminase 1 (308 aa).

Positions 64, 116, 161, 168, 192, 244, and 262 each coordinate substrate.

It belongs to the glutaminase family. In terms of assembly, homotetramer.

It carries out the reaction L-glutamine + H2O = L-glutamate + NH4(+). The protein is Glutaminase 1 of Halalkalibacterium halodurans (strain ATCC BAA-125 / DSM 18197 / FERM 7344 / JCM 9153 / C-125) (Bacillus halodurans).